A 100-amino-acid chain; its full sequence is NADH-quinone oxidoreductase subunit K 1 (100 aa).

The next 3 helical transmembrane spans lie at 4–24, 29–49, and 60–80; these read LNNY…GVLV, IVIF…FIAF, and IFVF…LALM.

This sequence belongs to the complex I subunit 4L family. NDH-1 is composed of 14 different subunits. Subunits NuoA, H, J, K, L, M, N constitute the membrane sector of the complex.

The protein localises to the cell inner membrane. It carries out the reaction a quinone + NADH + 5 H(+)(in) = a quinol + NAD(+) + 4 H(+)(out). NDH-1 shuttles electrons from NADH, via FMN and iron-sulfur (Fe-S) centers, to quinones in the respiratory chain. The immediate electron acceptor for the enzyme in this species is believed to be ubiquinone. Couples the redox reaction to proton translocation (for every two electrons transferred, four hydrogen ions are translocated across the cytoplasmic membrane), and thus conserves the redox energy in a proton gradient. This Geotalea daltonii (strain DSM 22248 / JCM 15807 / FRC-32) (Geobacter daltonii) protein is NADH-quinone oxidoreductase subunit K 1.